The sequence spans 178 residues: MKRALFPGRFQPPHWGHVYAVREILKEVDEVIITVGSAQFNYILKDPFTAGERIWMLREALREGGIDLSRVVIIPVPNVENNLEWLGRVKSLAPPFQIVYTGNPFVALLFKEAGYEVRQQPMFRREQLSSTRVRELILKGDPQWEELVPKSVAAIIKAIGGAERLRIAALGEAEPHKW.

The protein belongs to the archaeal NMN adenylyltransferase family.

Its subcellular location is the cytoplasm. It carries out the reaction beta-nicotinamide D-ribonucleotide + ATP + H(+) = diphosphate + NAD(+). The protein operates within cofactor biosynthesis; NAD(+) biosynthesis; NAD(+) from nicotinamide D-ribonucleotide: step 1/1. The sequence is that of Nicotinamide-nucleotide adenylyltransferase from Pyrobaculum aerophilum (strain ATCC 51768 / DSM 7523 / JCM 9630 / CIP 104966 / NBRC 100827 / IM2).